The chain runs to 179 residues: ATP synthase subunit delta (179 aa).

It belongs to the ATPase delta chain family. F-type ATPases have 2 components, F(1) - the catalytic core - and F(0) - the membrane proton channel. F(1) has five subunits: alpha(3), beta(3), gamma(1), delta(1), epsilon(1). F(0) has three main subunits: a(1), b(2) and c(10-14). The alpha and beta chains form an alternating ring which encloses part of the gamma chain. F(1) is attached to F(0) by a central stalk formed by the gamma and epsilon chains, while a peripheral stalk is formed by the delta and b chains.

The protein localises to the cell inner membrane. F(1)F(0) ATP synthase produces ATP from ADP in the presence of a proton or sodium gradient. F-type ATPases consist of two structural domains, F(1) containing the extramembraneous catalytic core and F(0) containing the membrane proton channel, linked together by a central stalk and a peripheral stalk. During catalysis, ATP synthesis in the catalytic domain of F(1) is coupled via a rotary mechanism of the central stalk subunits to proton translocation. In terms of biological role, this protein is part of the stalk that links CF(0) to CF(1). It either transmits conformational changes from CF(0) to CF(1) or is implicated in proton conduction. This Thermosipho melanesiensis (strain DSM 12029 / CIP 104789 / BI429) protein is ATP synthase subunit delta.